Reading from the N-terminus, the 331-residue chain is High-affinity nickel-transport protein NixA (331 aa).

Over 1–5 (MKLWF) the chain is Cytoplasmic. A helical transmembrane segment spans residues 6-26 (PYFLAIVFLHALGLALLFMAN). The Periplasmic portion of the chain corresponds to 27–33 (NASFYAA). The chain crosses the membrane as a helical span at residues 34–54 (ASMAYMLGAKHAFDADHIACI). At 55 to 66 (DNTIRKLTQQGK) the chain is on the cytoplasmic side. A helical transmembrane segment spans residues 67–87 (NAYGVGFYFSMGHSSVVILMT). Over 88 to 113 (IISAFAIAWAKEHTPMLEEIGGVVGT) the chain is Periplasmic. The helical transmembrane segment at 114–135 (LVSGLFLLIIGLLNAIILLDLL) threads the bilayer. Topologically, residues 136–178 (KIFKKSHSNESLSQQQNEEIERLLTSRGLLNRFFKPLFNFVSK) are cytoplasmic. The helical transmembrane segment at 179–199 (SWHIYPIGFLFGLGFDTASEI) threads the bilayer. Topologically, residues 200 to 225 (ALLALSSSAIKVSMVGMLSLPILFAA) are periplasmic. Residues 226-246 (GMSLFDTLDGAFMLKAYDWAF) form a helical membrane-spanning segment. At 247-252 (KTPLRK) the chain is on the cytoplasmic side. A helical transmembrane segment spans residues 253 to 273 (IYYNISITALSVFIALFIGLI). Over 274–302 (ELFQVVSEKLHLKFENRLLRALQSLEFTD) the chain is Periplasmic. Residues 303–322 (LGYYLVGLFVIAFLGSFFLW) form a helical membrane-spanning segment. Residues 323–331 (KIKFSKLES) are Cytoplasmic-facing.

It belongs to the NiCoT transporter (TC 2.A.52) family.

Its subcellular location is the cell inner membrane. In terms of biological role, high-affinity nickel intake protein. Imports nickel ions in an energy-dependent fashion. Necessary for the expression of catalytically active urease. This chain is High-affinity nickel-transport protein NixA (nixA), found in Helicobacter pylori (strain ATCC 700392 / 26695) (Campylobacter pylori).